The sequence spans 358 residues: UDP-N-acetylglucosamine--N-acetylmuramyl-(pentapeptide) pyrophosphoryl-undecaprenol N-acetylglucosamine transferase (358 aa).

UDP-N-acetyl-alpha-D-glucosamine-binding positions include 10–12 (TGG), asparagine 124, arginine 165, serine 191, isoleucine 246, and glutamine 291.

It belongs to the glycosyltransferase 28 family. MurG subfamily.

The protein localises to the cell inner membrane. It carries out the reaction di-trans,octa-cis-undecaprenyl diphospho-N-acetyl-alpha-D-muramoyl-L-alanyl-D-glutamyl-meso-2,6-diaminopimeloyl-D-alanyl-D-alanine + UDP-N-acetyl-alpha-D-glucosamine = di-trans,octa-cis-undecaprenyl diphospho-[N-acetyl-alpha-D-glucosaminyl-(1-&gt;4)]-N-acetyl-alpha-D-muramoyl-L-alanyl-D-glutamyl-meso-2,6-diaminopimeloyl-D-alanyl-D-alanine + UDP + H(+). It participates in cell wall biogenesis; peptidoglycan biosynthesis. In terms of biological role, cell wall formation. Catalyzes the transfer of a GlcNAc subunit on undecaprenyl-pyrophosphoryl-MurNAc-pentapeptide (lipid intermediate I) to form undecaprenyl-pyrophosphoryl-MurNAc-(pentapeptide)GlcNAc (lipid intermediate II). The sequence is that of UDP-N-acetylglucosamine--N-acetylmuramyl-(pentapeptide) pyrophosphoryl-undecaprenol N-acetylglucosamine transferase from Citrifermentans bemidjiense (strain ATCC BAA-1014 / DSM 16622 / JCM 12645 / Bem) (Geobacter bemidjiensis).